The chain runs to 181 residues: Large ribosomal subunit protein uL5 (181 aa).

This sequence belongs to the universal ribosomal protein uL5 family. Part of the 50S ribosomal subunit; contacts the 5S rRNA and probably tRNA. Forms a bridge to the 30S subunit in the 70S ribosome.

Functionally, this is one of the proteins that bind and probably mediate the attachment of the 5S RNA into the large ribosomal subunit, where it forms part of the central protuberance. In the 70S ribosome it contacts protein S13 of the 30S subunit (bridge B1b), connecting the 2 subunits; this bridge is implicated in subunit movement. May contact the P site tRNA; the 5S rRNA and some of its associated proteins might help stabilize positioning of ribosome-bound tRNAs. The sequence is that of Large ribosomal subunit protein uL5 from Methanococcus aeolicus (strain ATCC BAA-1280 / DSM 17508 / OCM 812 / Nankai-3).